The following is a 2601-amino-acid chain: Centrosomal protein of 295 kDa (2601 aa).

Positions 1–560 (MKRKVVNTHK…KKTQPTGVGI (560 aa)) are necessary for centriole targeting and microtubule association. Position 14 is a phosphoserine (Ser-14). Coiled-coil stretches lie at residues 207–273 (KRPD…EDLA) and 500–552 (AARI…KRKK). Residues Ser-654 and Ser-938 each carry the phosphoserine modification. A disordered region spans residues 1008-1029 (PSADTKSGKIQEQHSSKSEKGL). The segment covering 1013–1027 (KSGKIQEQHSSKSEK) has biased composition (basic and acidic residues). Coiled-coil stretches lie at residues 1053 to 1082 (LHDS…VELL) and 1498 to 1544 (IQSH…VSSE). The segment at 1558–1580 (ADSERTQKSFPTKSNDTLPSSHR) is disordered. The segment covering 1565 to 1577 (KSFPTKSNDTLPS) has biased composition (polar residues). Ser-1637 carries the phosphoserine modification. Residues 1728-1758 (QEKLLVQRQTALQQQIQKHEETLKDFFKDSQ) adopt a coiled-coil conformation. 3 stretches are compositionally biased toward basic and acidic residues: residues 1795 to 1827 (RHAD…DLGR), 1985 to 2003 (FSEH…KEEE), and 2100 to 2112 (DNRD…DSSS). Disordered regions lie at residues 1795-1834 (RHAD…KPPV), 1979-2004 (LTDP…EEET), and 2085-2117 (HPDF…SHCA). A Phosphothreonine modification is found at Thr-2473. The tract at residues 2478-2601 (SLQEAFIKRK…LEKLRAKNTC (124 aa)) is ALMS motif. The stretch at 2556 to 2581 (RLYNQLAEVKQQKEEKTKQEAYAQNR) forms a coiled coil.

As to quaternary structure, interacts (via ALMS motif) with microtubules; this interaction is direct.

The protein resides in the cytoplasm. Its subcellular location is the cytoskeleton. It is found in the microtubule organizing center. The protein localises to the centrosome. It localises to the centriole. The protein resides in the spindle. Centriole-enriched microtubule-binding protein involved in centriole biogenesis. Essential for the generation of the distal portion of new-born centrioles in a CPAP- and CEP120-mediated elongation dependent manner during the cell cycle S/G2 phase after formation of the initiating cartwheel structure. Required for the recruitment of centriolar proteins, such as POC1B, POC5 and CEP135, into the distal portion of centrioles. Also required for centriole-to-centrosome conversion during mitotic progression, but is dispensable for cartwheel removal or centriole disengagement. Binds to and stabilizes centriolar microtubule. May be involved in ciliogenesis. This chain is Centrosomal protein of 295 kDa, found in Homo sapiens (Human).